The following is a 159-amino-acid chain: Small ribosomal subunit protein uS7 (159 aa).

Belongs to the universal ribosomal protein uS7 family. Part of the 30S ribosomal subunit. Contacts proteins S9 and S11.

In terms of biological role, one of the primary rRNA binding proteins, it binds directly to 16S rRNA where it nucleates assembly of the head domain of the 30S subunit. Is located at the subunit interface close to the decoding center, probably blocks exit of the E-site tRNA. In Endomicrobium trichonymphae, this protein is Small ribosomal subunit protein uS7.